The sequence spans 220 residues: Uracil-DNA glycosylase 1 (220 aa).

Residue Asp65 is the Proton acceptor of the active site.

The protein belongs to the uracil-DNA glycosylase (UDG) superfamily. UNG family.

It is found in the cytoplasm. It carries out the reaction Hydrolyzes single-stranded DNA or mismatched double-stranded DNA and polynucleotides, releasing free uracil.. Functionally, excises uracil residues from the DNA which can arise as a result of misincorporation of dUMP residues by DNA polymerase or due to deamination of cytosine. The polypeptide is Uracil-DNA glycosylase 1 (Bacteroides fragilis (strain YCH46)).